The following is a 338-amino-acid chain: Fructose-1,6-bisphosphatase class 1 (338 aa).

4 residues coordinate Mg(2+): Glu90, Asp112, Leu114, and Asp115. Substrate-binding positions include 115–118, Asn207, and Lys273; that span reads DGSS. Position 279 (Glu279) interacts with Mg(2+).

Belongs to the FBPase class 1 family. Homotetramer. Mg(2+) is required as a cofactor.

It is found in the cytoplasm. It carries out the reaction beta-D-fructose 1,6-bisphosphate + H2O = beta-D-fructose 6-phosphate + phosphate. Its pathway is carbohydrate biosynthesis; gluconeogenesis. This chain is Fructose-1,6-bisphosphatase class 1, found in Stenotrophomonas maltophilia (strain R551-3).